The primary structure comprises 60 residues: Homeobox protein engrailed-like B (60 aa).

A DNA-binding region (homeobox) is located at residues 1–41 (VEQLQRLKSEFGASRYLTEARRQALAQELRLNEAQIKIWFQ).

This sequence belongs to the engrailed homeobox family.

It is found in the nucleus. This Myxine glutinosa (Atlantic hagfish) protein is Homeobox protein engrailed-like B.